The chain runs to 64 residues: PYLa/PGLa A (64 aa).

A signal peptide spans 1 to 20 (MYKQIFLCLIIAALCATIMA). A propeptide spanning residues 21–35 (EASAFADADEDDDKR) is cleaved from the precursor. Residue Leu-59 is modified to Leucine amide. The propeptide occupies 60 to 64 (GRRDS).

The protein belongs to the gastrin/cholecystokinin family. Magainin subfamily. In terms of tissue distribution, expressed by the skin glands. Synthesized in the stomach and stored in a novel granular multinucleated cell in the gastric mucosa. Stored as active, processed peptides in large granules within the granular gland secretions of the skin.

It is found in the secreted. PGLa and PGLa-H display a broad-spectrum of antibacterial activity against a range of Gram-positive and Gram-negative bacteria. PGLa also displays antifungal activity against C.albicans ATCC 14053. PGLa-H shows moderate antibacterial activity against the multidrug-resistant methicillin-resistant S.aureus (MRSA) but exhibits very little hemolytic activity. This is PYLa/PGLa A (pgla-a) from Xenopus laevis (African clawed frog).